The primary structure comprises 401 residues: Probable sodium/metabolite cotransporter BASS1, chloroplastic (401 aa).

The N-terminal 70 residues, 1–70 (MASAISLSLL…RRSRFDFVPR (70 aa)), are a transit peptide targeting the chloroplast. Transmembrane regions (helical) follow at residues 92 to 112 (FVGEAVSTAFPIWVSLGCLLG), 122 to 142 (VTPNWTIVGLTITMLGMGMTL), 156 to 176 (ELFAGFLLQYSVMPLSAFFVS), 187 to 207 (AGLILVGCCPGGTASNIVTYI), 212 to 232 (VALSVLMTAASTVSAVIMTPL), 247 to 267 (LGLLMSTLQVVLLPVLAGAFL), 278 to 298 (VSPVMPPIAVGTVAILCGYAI), 311 to 331 (QVVLASCLLHISGFLFGYLFS), and 371 to 391 (VPCAVSSVCHSILGSVLAGIW).

This sequence belongs to the bile acid:sodium symporter (BASS) (TC 2.A.28) family.

It localises to the membrane. It is found in the plastid. Its subcellular location is the chloroplast envelope. May function as sodium-coupled metabolite transporter across the chloroplast envelope. The protein is Probable sodium/metabolite cotransporter BASS1, chloroplastic (BASS1) of Arabidopsis thaliana (Mouse-ear cress).